The primary structure comprises 395 residues: Elongation factor Tu (395 aa).

The 195-residue stretch at 10-204 folds into the tr-type G domain; the sequence is KPHVNIGTIG…TVDEYIPTPQ (195 aa). The interval 19–26 is G1; sequence GHVDHGKT. 19–26 contacts GTP; it reads GHVDHGKT. Threonine 26 contacts Mg(2+). The interval 60–64 is G2; that stretch reads GITIN. The segment at 81–84 is G3; sequence DAPG. GTP contacts are provided by residues 81-85 and 136-139; these read DAPGH and NKCD. Residues 136–139 are G4; sequence NKCD. Positions 174-176 are G5; sequence SAL.

The protein belongs to the TRAFAC class translation factor GTPase superfamily. Classic translation factor GTPase family. EF-Tu/EF-1A subfamily. Monomer.

Its subcellular location is the cytoplasm. The enzyme catalyses GTP + H2O = GDP + phosphate + H(+). Functionally, GTP hydrolase that promotes the GTP-dependent binding of aminoacyl-tRNA to the A-site of ribosomes during protein biosynthesis. The polypeptide is Elongation factor Tu (Ligilactobacillus salivarius (strain UCC118) (Lactobacillus salivarius)).